The primary structure comprises 332 residues: Invasin IpaD (332 aa).

Positions 1-25 (MNITTLTNSISTSSFSPNNTNGSST) are enriched in low complexity. A disordered region spans residues 1 to 43 (MNITTLTNSISTSSFSPNNTNGSSTETVNSDIKTTTSSHPVSS). The segment covering 26 to 43 (ETVNSDIKTTTSSHPVSS) has biased composition (polar residues). A coiled-coil region spans residues 44–77 (LTMLNDTLHNIRTTNQALKKELSQKTLTKTSLEE). Residues 192–267 (VNSLKKALEE…KSLDNLGGNG (76 aa)) are ipaB binding.

The protein belongs to the invasin protein D family.

Its subcellular location is the secreted. Required for bacterial invasion of host cells. Controls IpaB and IpaC secretion, and the efficiency with which they are physically inserted into target cell membranes. These proteins are exported via T3SS to form a pore in the host membrane that allows the translocation of the other effectors into the host cytoplasm. Along with IpaB, is essential for both blocking secretion through the Mxi/Spa translocon in the absence of a secretion-inducing signal, and for controlling the level of secretion in the presence of this signal. This is Invasin IpaD (ipaD) from Shigella flexneri.